The primary structure comprises 224 residues: Octanoyltransferase (224 aa).

Residues 45 to 223 enclose the BPL/LPL catalytic domain; it reads PSNKQAVWML…SLNKRFGLLW (179 aa). Substrate-binding positions include 87 to 94, 154 to 156, and 167 to 169; these read RGGDVTHH, SIG, and GIA. C185 functions as the Acyl-thioester intermediate in the catalytic mechanism.

It belongs to the LipB family.

The protein resides in the cytoplasm. The catalysed reaction is octanoyl-[ACP] + L-lysyl-[protein] = N(6)-octanoyl-L-lysyl-[protein] + holo-[ACP] + H(+). It participates in protein modification; protein lipoylation via endogenous pathway; protein N(6)-(lipoyl)lysine from octanoyl-[acyl-carrier-protein]: step 1/2. Catalyzes the transfer of endogenously produced octanoic acid from octanoyl-acyl-carrier-protein onto the lipoyl domains of lipoate-dependent enzymes. Lipoyl-ACP can also act as a substrate although octanoyl-ACP is likely to be the physiological substrate. This chain is Octanoyltransferase, found in Prochlorococcus marinus (strain SARG / CCMP1375 / SS120).